Reading from the N-terminus, the 443-residue chain is Probable glycine dehydrogenase (decarboxylating) subunit 1 (443 aa).

This sequence belongs to the GcvP family. N-terminal subunit subfamily. The glycine cleavage system is composed of four proteins: P, T, L and H. In this organism, the P 'protein' is a heterodimer of two subunits.

The enzyme catalyses N(6)-[(R)-lipoyl]-L-lysyl-[glycine-cleavage complex H protein] + glycine + H(+) = N(6)-[(R)-S(8)-aminomethyldihydrolipoyl]-L-lysyl-[glycine-cleavage complex H protein] + CO2. Its function is as follows. The glycine cleavage system catalyzes the degradation of glycine. The P protein binds the alpha-amino group of glycine through its pyridoxal phosphate cofactor; CO(2) is released and the remaining methylamine moiety is then transferred to the lipoamide cofactor of the H protein. This is Probable glycine dehydrogenase (decarboxylating) subunit 1 from Oleidesulfovibrio alaskensis (strain ATCC BAA-1058 / DSM 17464 / G20) (Desulfovibrio alaskensis).